The primary structure comprises 601 residues: Nuclear receptor subfamily 2 group C member 1 (601 aa).

Residues 1 to 179 are required for interaction with KAT2B; the sequence is MATIEEIAHQ…RLQRCIAFGM (179 aa). A DNA-binding region (nuclear receptor) is located at residues 111–186; sequence FDLCVVCGDK…FGMKQDSVQC (76 aa). 2 NR C4-type zinc fingers span residues 114–134 and 150–169; these read CVVCGDKASGRHYGAVTCEGC and CRGSKDCIINKHHRNRCQYC. Residues Ser-198 and Ser-216 each carry the phosphoserine modification. Thr-221 is subject to Phosphothreonine. Phosphothreonine; by MAPK1 is present on Thr-223. Residue Lys-251 forms a Glycyl lysine isopeptide (Lys-Gly) (interchain with G-Cter in SUMO); alternate linkage. Lys-251 is covalently cross-linked (Glycyl lysine isopeptide (Lys-Gly) (interchain with G-Cter in SUMO2); alternate). Residues 349–591 form the NR LBD domain; the sequence is GSVHLITGDS…SVIPHILKME (243 aa). The residue at position 582 (Ser-582) is a Phosphoserine; by PKC. The tract at residues 585 to 601 is required for interaction with NRIP1; sequence PHILKMEPGQYSKTSSL. Lys-589 participates in a covalent cross-link: Glycyl lysine isopeptide (Lys-Gly) (interchain with G-Cter in SUMO2).

It belongs to the nuclear hormone receptor family. NR2 subfamily. In terms of assembly, homodimer. Heterodimer; with NR2C2 which is required for chromatin remodeling and for binding to promoter regions such as globin DR1 repeats. Interacts with ESR1; the interaction prevents homodimerization of ESR1 and suppresses its transcriptional activity and cell growth. Interacts with NRIP1 (via its LXXLL motifs); the interaction provides corepressor activity. Interacts with HDAC3 (via the DNA-binding domain); the interaction recruits phosphorylated NR2C1 to PML bodies for sumoylation. Interacts with HDAC4 (via the DNA-binding domain). Interacts with PIAS1; the interaction is required for sumoylation of NR2C1. Interacts with UBE2I; the interaction is required for sumoylation of NR2C1. Interacts with KAT2B; the interaction acts as a corepressor of gene expression. Sumoylation requires both PIAS1 and UBE2I. Sumoylation appears to dissociate NR2C1 from the PML nuclear bodies. Enhances the interaction with NRIP1 but inhibits interaction with KAT2B. In proliferating cells, stimulation by all-trans retinoic acid, activation of MAPK1-mediated phosphorylation and recruitment to PML bodies with subsequent sumoylation, suppresses OCT4 expression. Post-translationally, phosphorylated on several serine and threonine residues. Phosphorylation on Thr-223, stimulated by all-trans retinoic acid (atRA) mediates PML location and sumoylation in proliferating cells which then modulates its association with effector molecules, KAT2B and NRIP1. Phosphorylation on Ser-582 by PKC is important for protein stability and function as activator of RARB.

The protein localises to the nucleus. The protein resides in the PML body. Its function is as follows. Orphan nuclear receptor. Binds the IR7 element in the promoter of its own gene in an autoregulatory negative feedback mechanism. Primarily repressor of a broad range of genes including ESR1 and RARB. Together with NR2C2, forms the core of the DRED (direct repeat erythroid-definitive) complex that represses embryonic and fetal globin transcription. Binds to hormone response elements (HREs) consisting of two 5'-AGGTCA-3' half site direct repeat consensus sequences. Also activator of OCT4 gene expression. Plays a fundamental role in early embryogenesis and regulates embryonic stem cell proliferation and differentiation. Mediator of retinoic acid-regulated preadipocyte proliferation. This chain is Nuclear receptor subfamily 2 group C member 1 (NR2C1), found in Pongo abelii (Sumatran orangutan).